The chain runs to 692 residues: Formate hydrogenlyase transcriptional activator FhlA (692 aa).

The GAF domain occupies 202-344; that stretch reads DMDELVSEVA…QIAERVAIAV (143 aa). The region spanning 381–610 is the Sigma-54 factor interaction domain; it reads IIGRSEAMYS…LENVIERAVL (230 aa). ATP-binding positions include 409-416 and 472-481; these read GETGTGKE and ADKSSLFLDE. A DNA-binding region (H-T-H motif) is located at residues 663–682; the sequence is PKGAAQRLGLKRTTLLSRMK.

Functionally, required for induction of expression of the formate dehydrogenase H and hydrogenase-3 structural genes. Also activates expression of hyf operon (encodes the silent hydrogenase-4 gene cluster). The sequence is that of Formate hydrogenlyase transcriptional activator FhlA (fhlA) from Escherichia coli (strain K12).